A 572-amino-acid chain; its full sequence is Capsid vertex component 2 (572 aa).

The interaction with major capsid protein/MCP stretch occupies residues 1-58 (MFRPRFEPMNLPKDSNKPSTLMVLADRLNFISCAEGSSKYASKLFEGTLIDAEIMTNR).

Belongs to the herpesviridae CVC2 protein family. In terms of assembly, heterodimerizes with CVC1. Interacts with major capsid protein/MCP and triplex capsid protein 1/TRX1 at the pentamer vertices. Interacts with the large tegument protein/LTP.

It is found in the virion. The protein localises to the host nucleus. Capsid vertex-specific component that plays a role during viral DNA encapsidation, assuring correct genome cleavage and presumably stabilizing capsids that contain full-length viral genomes. Participates in the interaction between the capsid and the tegument through interaction with the large tegument protein/LTP. This is Capsid vertex component 2 from Infectious laryngotracheitis virus (strain Thorne V882) (ILTV).